Here is a 111-residue protein sequence, read N- to C-terminus: C-type lectin lectoxin-Enh1 (111 aa).

Positions 1–23 are cleaved as a signal peptide; the sequence is MGQFTVVSLGLLAMFLSLSGAKG. C26 and C37 are disulfide-bonded. In terms of domain architecture, C-type lectin spans 33–108; the sequence is RNGVCNKLFP…CASLHPFICQ (76 aa). Residues 72-74 carry the Mannose-binding motif; the sequence is EPN. Ca(2+) is bound by residues E80, N95, and D96. Cysteines 82 and 99 form a disulfide.

It belongs to the true venom lectin family. As to expression, expressed by the venom gland.

The protein resides in the secreted. Functionally, mannose-binding lectin which recognizes specific carbohydrate structures and agglutinates a variety of animal cells by binding to cell-surface glycoproteins and glycolipids. May be a calcium-dependent lectin. This Pseudoferania polylepis (Macleay's water snake) protein is C-type lectin lectoxin-Enh1.